A 428-amino-acid polypeptide reads, in one-letter code: Enolase (428 aa).

Position 163 (Gln163) interacts with (2R)-2-phosphoglycerate. Catalysis depends on Glu205, which acts as the Proton donor. Mg(2+)-binding residues include Asp242, Glu285, and Asp312. (2R)-2-phosphoglycerate is bound by residues Lys337, Arg366, Ser367, and Lys388. Lys337 acts as the Proton acceptor in catalysis.

The protein belongs to the enolase family. Mg(2+) serves as cofactor.

Its subcellular location is the cytoplasm. It is found in the secreted. The protein localises to the cell surface. The catalysed reaction is (2R)-2-phosphoglycerate = phosphoenolpyruvate + H2O. It functions in the pathway carbohydrate degradation; glycolysis; pyruvate from D-glyceraldehyde 3-phosphate: step 4/5. In terms of biological role, catalyzes the reversible conversion of 2-phosphoglycerate (2-PG) into phosphoenolpyruvate (PEP). It is essential for the degradation of carbohydrates via glycolysis. This chain is Enolase, found in Erythrobacter litoralis (strain HTCC2594).